The following is a 115-amino-acid chain: Parathyroid hormone (115 aa).

An N-terminal signal peptide occupies residues 1–25 (MMSAKNMVKVMIVMFAIFLLAKSDG). The propeptide occupies 26 to 31 (KPVRKR). The interval 51–69 (RVEWLRKKLQDVHNFIALG) is important for receptor binding. Residues 73 to 115 (FHRDGGSQRPRKKEDNVLIESHQKSLGEADKADVDVLSKTKSQ) are disordered.

This sequence belongs to the parathyroid hormone family. In terms of assembly, interacts with PTH1R (via N-terminal extracellular domain).

The protein resides in the secreted. Functionally, parathyroid hormone elevates calcium level by dissolving the salts in bone and preventing their renal excretion. Acts by binding to its receptor, PTH1R, activating G protein-coupled receptor signaling. Stimulates [1-14C]-2-deoxy-D-glucose (2DG) transport and glycogen synthesis in osteoblastic cells. The protein is Parathyroid hormone (PTH) of Equus caballus (Horse).